We begin with the raw amino-acid sequence, 88 residues long: Small ribosomal subunit protein bS18 (88 aa).

The tract at residues 1–26 is disordered; that stretch reads MAFAQSGGAGGGGGQRRPFFRRRKTC.

This sequence belongs to the bacterial ribosomal protein bS18 family. In terms of assembly, part of the 30S ribosomal subunit. Forms a tight heterodimer with protein bS6.

Its function is as follows. Binds as a heterodimer with protein bS6 to the central domain of the 16S rRNA, where it helps stabilize the platform of the 30S subunit. This chain is Small ribosomal subunit protein bS18, found in Xanthobacter autotrophicus (strain ATCC BAA-1158 / Py2).